The sequence spans 535 residues: MVDLSVSPDSLKPVSLTSSLVFLMHLLLLQPGEPSSEVKVLGPEYPILALVGEEVEFPCHLWPQLDAQQMEIRWFRSQTFNVVHLYQEQQELPGRQMPAFRNRTKLVKDDIAYGSVVLQLHSIIPSDKGTYGCRFHSDNFSGEALWELEVAGLGSDPHLSLEGFKEGGIQLRLRSSGWYPKPKVQWRDHQGQCLPPEFEAIVWDAQDLFSLETSVVVRAGALSNVSVSIQNLLLSQKKELVVQIADVFVPGASAWKSAFVATLPLLLVLAALALGVLRKQRRSREKLRKQAEKRQEKLTAELEKLQTELDWRRAEGQAEWRAAQKYAVDVTLDPASAHPSLEVSEDGKSVSSRGAPPGPAPGHPQRFSEQTCALSLERFSAGRHYWEVHVGRRSRWFLGACLAAVPRAGPARLSPAAGYWVLGLWNGCEYFVLAPHRVALTLRVPPRRLGVFLDYEAGELSFFNVSDGSHIFTFHDTFSGALCAYFRPRAHDGGEHPDPLTICPLPVRGTGVPEENDSDTWLQPYEPADPALDWW.

The first 34 residues, 1–34 (MVDLSVSPDSLKPVSLTSSLVFLMHLLLLQPGEP), serve as a signal peptide directing secretion. Residues 35 to 256 (SSEVKVLGPE…VFVPGASAWK (222 aa)) lie on the Extracellular side of the membrane. The Ig-like V-type domain maps to 54-135 (EVEFPCHLWP…SDKGTYGCRF (82 aa)). C59 and C133 are disulfide-bonded. 3 N-linked (GlcNAc...) asparagine glycosylation sites follow: N102, N139, and N224. A helical transmembrane segment spans residues 257–277 (SAFVATLPLLLVLAALALGVL). Residues 276–315 (VLRKQRRSREKLRKQAEKRQEKLTAELEKLQTELDWRRAE) are a coiled coil. Topologically, residues 278–535 (RKQRRSREKL…EPADPALDWW (258 aa)) are cytoplasmic. In terms of domain architecture, B30.2/SPRY spans 310-509 (DWRRAEGQAE…LTICPLPVRG (200 aa)). Residues 340 to 367 (SLEVSEDGKSVSSRGAPPGPAPGHPQRF) form a disordered region.

Belongs to the immunoglobulin superfamily. BTN/MOG family.

The protein localises to the membrane. This Homo sapiens (Human) protein is Butyrophilin-like protein 9 (BTNL9).